The sequence spans 668 residues: Probable tRNA (uracil-O(2)-)-methyltransferase (668 aa).

The segment at 441–460 (QHTDSLHISTKSSLDKDDPP) is disordered. The C3H1-type zinc-finger motif lies at 620–649 (LKTRLCWFYVHHPNGCPRVAKSCPYAHGAE).

Belongs to the TRM44 family.

The protein localises to the cytoplasm. The catalysed reaction is uridine(44) in tRNA(Ser) + S-adenosyl-L-methionine = 2'-O-methyluridine(44) in tRNA(Ser) + S-adenosyl-L-homocysteine + H(+). In terms of biological role, probable adenosyl-L-methionine (AdoMet)-dependent tRNA (uracil-O(2)-)-methyltransferase. The protein is Probable tRNA (uracil-O(2)-)-methyltransferase (trmt44) of Xenopus laevis (African clawed frog).